A 984-amino-acid polypeptide reads, in one-letter code: Mineralocorticoid receptor (984 aa).

The modulating stretch occupies residues 1 to 602 (METKGYHSLP…STGSSRPSKI (602 aa)). Over residues 231 to 243 (QGTPLTCSPNVEN) the composition is skewed to polar residues. 2 disordered regions span residues 231-329 (QGTP…AAST) and 347-373 (GTSA…QEVP). Ser250, Ser259, Ser283, Ser287, and Ser299 each carry phosphoserine. Residues 259 to 291 (SPLSSPLSSMKSSISSPPSHCSVKSPVSSPNNV) are compositionally biased toward low complexity. The span at 292-329 (TLRSSVSSPANINNSRCSVSSPSNTNNRSTLSSPAAST) shows a compositional bias: polar residues. 8 residues coordinate Zn(2+): Cys603, Cys606, Cys620, Cys623, Cys639, Cys645, Cys655, and Cys658. 2 consecutive NR C4-type zinc fingers follow at residues 603 to 623 (CLVC…CGSC) and 639 to 663 (CAGR…LQKC). Residues 603 to 668 (CLVCGDEASG…RLQKCLQAGM (66 aa)) constitute a DNA-binding region (nuclear receptor). Residues 669–725 (NLGARKSKKLGKLKGIHEEQPQQQQPPPPPPPPQSPEEGTTYIAPAKEPSVNTALVP) are hinge. The interval 684-710 (IHEEQPQQQQPPPPPPPPQSPEEGTTY) is disordered. Positions 692–703 (QQPPPPPPPPQS) are enriched in pro residues. The NR LBD domain maps to 726 to 964 (QLSTISRALT…EFPAMLVEII (239 aa)). Positions 770 and 776 each coordinate 21-hydroxyprogesterone. Aldosterone is bound by residues Asn770 and Gln776. Positions 770 and 776 each coordinate progesterone. Positions 782–785 (KWAK) are important for coactivator binding. 2 residues coordinate 21-hydroxyprogesterone: Arg817 and Thr945. Aldosterone contacts are provided by Arg817 and Thr945. Residues Arg817 and Thr945 each coordinate progesterone.

Belongs to the nuclear hormone receptor family. NR3 subfamily. Heteromultimeric cytoplasmic complex with HSP90, HSP70, and FKBP4, in the absence of ligand. After ligand binding, it translocates to the nucleus and binds to DNA as a homodimer and as a heterodimer with NR3C1. May interact with HSD11B2 in the absence of ligand. Binds the coactivators NCOA1, NCOA2, TIF1 and NRIP1. In terms of processing, phosphorylated. In terms of tissue distribution, ubiquitous. Highly expressed in distal tubules, convoluted tubules and cortical collecting duct in kidney, and in sweat glands. Detected at lower levels in cardiomyocytes, in epidermis and in colon enterocytes.

The protein localises to the cytoplasm. It is found in the nucleus. It localises to the endoplasmic reticulum membrane. Functionally, receptor for both mineralocorticoids (MC) such as aldosterone and glucocorticoids (GC) such as corticosterone or cortisol. Binds to mineralocorticoid response elements (MRE) and transactivates target genes. The effect of MC is to increase ion and water transport and thus raise extracellular fluid volume and blood pressure and lower potassium levels. This Homo sapiens (Human) protein is Mineralocorticoid receptor (NR3C2).